The following is a 466-amino-acid chain: Probable fibrosin-1 (466 aa).

Residue Lys-8 forms a Glycyl lysine isopeptide (Lys-Gly) (interchain with G-Cter in SUMO2) linkage. Residues Arg-229 and Arg-239 each carry the asymmetric dimethylarginine modification. Disordered stretches follow at residues 236–315 (AWVR…AAAA) and 410–466 (LLYS…RADR). Residues 248–272 (GSDKERPMERREPSVTKEEKDRDLP) are compositionally biased toward basic and acidic residues. A Phosphoserine modification is found at Ser-281. Basic and acidic residues predominate over residues 288 to 311 (RAGEEGARPAKESVRVKEERKEEA). The span at 442 to 459 (APPPLVPAPRPSSPPRAP) shows a compositional bias: pro residues.

The polypeptide is Probable fibrosin-1 (Fbrs) (Mus musculus (Mouse)).